A 707-amino-acid polypeptide reads, in one-letter code: Ribosomal RNA large subunit methyltransferase K/L (707 aa).

The THUMP domain maps to 43-154; the sequence is QIYRCCLWSR…KDKAILGVDM (112 aa).

The protein belongs to the methyltransferase superfamily. RlmKL family.

It localises to the cytoplasm. The enzyme catalyses guanosine(2445) in 23S rRNA + S-adenosyl-L-methionine = N(2)-methylguanosine(2445) in 23S rRNA + S-adenosyl-L-homocysteine + H(+). It catalyses the reaction guanosine(2069) in 23S rRNA + S-adenosyl-L-methionine = N(2)-methylguanosine(2069) in 23S rRNA + S-adenosyl-L-homocysteine + H(+). Functionally, specifically methylates the guanine in position 2445 (m2G2445) and the guanine in position 2069 (m7G2069) of 23S rRNA. In Vibrio parahaemolyticus serotype O3:K6 (strain RIMD 2210633), this protein is Ribosomal RNA large subunit methyltransferase K/L.